Here is a 366-residue protein sequence, read N- to C-terminus: Chorismate synthase (366 aa).

Residues Arg-48 and Arg-54 each coordinate NADP(+). Residues 125–127 (RSS), 238–239 (NA), Gly-278, 293–297 (KPTSS), and Arg-319 each bind FMN.

The protein belongs to the chorismate synthase family. Homotetramer. Requires FMNH2 as cofactor.

The catalysed reaction is 5-O-(1-carboxyvinyl)-3-phosphoshikimate = chorismate + phosphate. The protein operates within metabolic intermediate biosynthesis; chorismate biosynthesis; chorismate from D-erythrose 4-phosphate and phosphoenolpyruvate: step 7/7. Its function is as follows. Catalyzes the anti-1,4-elimination of the C-3 phosphate and the C-6 proR hydrogen from 5-enolpyruvylshikimate-3-phosphate (EPSP) to yield chorismate, which is the branch point compound that serves as the starting substrate for the three terminal pathways of aromatic amino acid biosynthesis. This reaction introduces a second double bond into the aromatic ring system. This is Chorismate synthase from Burkholderia multivorans (strain ATCC 17616 / 249).